We begin with the raw amino-acid sequence, 152 residues long: Calmodulin-like protein 2 (152 aa).

EF-hand domains lie at 1–36 (MDRGELSRVFQMFDKNGDGKIAKNELKDFFKSVGIM), 37–72 (VPENEINEMIAKMDVNGDGAMDIDEFGSLYQEMVEE), 74–109 (EEEEDMREAFRVFDQNGDGFITDEELRSVLASMGLK), and 112–147 (RTLEDCKKMISKVDVDGDGMVNFKEFKQMMRGGGFA). Ca(2+) contacts are provided by Asp14, Asn16, Asp18, Lys20, Glu25, Asp50, Asn52, Asp54, Glu61, Asp87, Asn89, Asp91, Glu98, Asp125, Asp127, Asp129, Met131, and Glu136.

Belongs to the calmodulin family.

In terms of biological role, potential calcium sensor that is required for pollen tube attraction for ovule fertilization. This Arabidopsis thaliana (Mouse-ear cress) protein is Calmodulin-like protein 2 (CML2).